A 572-amino-acid chain; its full sequence is Urease subunit alpha (572 aa).

The region spanning 136-572 (GGIDTHIHWI…VPLAQRYFLF (437 aa)) is the Urease domain. Ni(2+) is bound by residues H141, H143, and K224. The residue at position 224 (K224) is an N6-carboxylysine. Residue H226 participates in substrate binding. Ni(2+) is bound by residues H253 and H279. H327 (proton donor) is an active-site residue. D367 provides a ligand contact to Ni(2+).

Belongs to the metallo-dependent hydrolases superfamily. Urease alpha subunit family. As to quaternary structure, heterotrimer of UreA (gamma), UreB (beta) and UreC (alpha) subunits. Three heterotrimers associate to form the active enzyme. It depends on Ni cation as a cofactor. Carboxylation allows a single lysine to coordinate two nickel ions.

The protein localises to the cytoplasm. It carries out the reaction urea + 2 H2O + H(+) = hydrogencarbonate + 2 NH4(+). It participates in nitrogen metabolism; urea degradation; CO(2) and NH(3) from urea (urease route): step 1/1. This chain is Urease subunit alpha, found in Actinobacillus pleuropneumoniae (Haemophilus pleuropneumoniae).